The chain runs to 486 residues: Probable glucan endo-1,3-beta-glucosidase eglC (486 aa).

The first 18 residues, 1 to 18, serve as a signal peptide directing secretion; it reads MQLTQLLALALSLATSEA. N-linked (GlcNAc...) asparagine glycosylation is present at N84. The active-site Proton donor is the E128. N183 carries N-linked (GlcNAc...) asparagine glycosylation. E239 acts as the Nucleophile in catalysis. N-linked (GlcNAc...) asparagine glycosylation is found at N315, N386, N396, and N404. A disordered region spans residues 330–458; that stretch reads AAAGGVAGGS…SSGAASPSST (129 aa). 2 stretches are compositionally biased toward low complexity: residues 341-404 and 413-424; these read GSAS…HGSN and SVSNVSPSKSSS. Residues 430–442 show a composition bias toward polar residues; the sequence is AATSMGASPSSVG. The segment covering 445–458 has biased composition (low complexity); it reads GPSKSSGAASPSST. Residue G463 is the site of GPI-anchor amidated glycine attachment. A propeptide spans 464–486 (removed in mature form); the sequence is AATSVSAPVVHVVLLALMMVIAA.

Belongs to the glycosyl hydrolase 17 family. The GPI-anchor is attached to the protein in the endoplasmic reticulum and serves to target the protein to the cell surface. There, the glucosamine-inositol phospholipid moiety is cleaved off and the GPI-modified mannoprotein is covalently attached via its lipidless GPI glycan remnant to the 1,6-beta-glucan of the outer cell wall layer.

The protein resides in the cell membrane. It is found in the secreted. Its subcellular location is the cell wall. It carries out the reaction Hydrolysis of (1-&gt;3)-beta-D-glucosidic linkages in (1-&gt;3)-beta-D-glucans.. Glucanases play a role in cell expansion during growth, in cell-cell fusion during mating, and in spore release during sporulation. This enzyme may be involved in beta-glucan degradation and also function biosynthetically as a transglycosylase. This is Probable glucan endo-1,3-beta-glucosidase eglC (eglC) from Aspergillus terreus (strain NIH 2624 / FGSC A1156).